The chain runs to 219 residues: UPF0073 inner membrane protein YqfA (219 aa).

The Cytoplasmic segment spans residues 1–23 (MVQKPLIKQGYSLAEEIANSVSH). Residues 24 to 44 (GIGLVFGIVGLVLLLVQAVDL) traverse the membrane as a helical segment. The Periplasmic segment spans residues 45-53 (NASATAITS). The helical transmembrane segment at 54–74 (YSLYGGSMILLFLASTLYHAI) threads the bilayer. Topologically, residues 75 to 90 (PHQRAKMWLKKFDHCA) are cytoplasmic. A helical membrane pass occupies residues 91-111 (IYLLIAGTYTPFLLVGLDSPL). At 112–113 (AR) the chain is on the periplasmic side. The helical transmembrane segment at 114 to 134 (GLMIVIWSLALLGILFKLTIA) threads the bilayer. Residues 135–138 (HRFK) are Cytoplasmic-facing. The chain crosses the membrane as a helical span at residues 139–159 (ILSLVTYLAMGWLSLVVIYEM). The Periplasmic portion of the chain corresponds to 160–165 (AVKLAA). A helical transmembrane segment spans residues 166 to 186 (GSVTLLAVGGVVYSLGVIFYV). Residues 187–195 (CKRIPYNHA) lie on the Cytoplasmic side of the membrane. Residues 196–216 (IWHGFVLGGSVCHFLAIYLYI) traverse the membrane as a helical segment. The Periplasmic segment spans residues 217-219 (GQA).

The protein belongs to the UPF0073 (Hly-III) family.

The protein resides in the cell inner membrane. The polypeptide is UPF0073 inner membrane protein YqfA (yqfA) (Escherichia coli O157:H7).